The primary structure comprises 174 residues: Small ribosomal subunit protein uS5 (174 aa).

An S5 DRBM domain is found at 18–81 (LKDRLVSVNR…EDAKKNLVKI (64 aa)).

The protein belongs to the universal ribosomal protein uS5 family. Part of the 30S ribosomal subunit. Contacts proteins S4 and S8.

With S4 and S12 plays an important role in translational accuracy. Its function is as follows. Located at the back of the 30S subunit body where it stabilizes the conformation of the head with respect to the body. The polypeptide is Small ribosomal subunit protein uS5 (Flavobacterium psychrophilum (strain ATCC 49511 / DSM 21280 / CIP 103535 / JIP02/86)).